Here is a 456-residue protein sequence, read N- to C-terminus: Exodeoxyribonuclease 7 large subunit (456 aa).

It belongs to the XseA family. As to quaternary structure, heterooligomer composed of large and small subunits.

It is found in the cytoplasm. It catalyses the reaction Exonucleolytic cleavage in either 5'- to 3'- or 3'- to 5'-direction to yield nucleoside 5'-phosphates.. Bidirectionally degrades single-stranded DNA into large acid-insoluble oligonucleotides, which are then degraded further into small acid-soluble oligonucleotides. The polypeptide is Exodeoxyribonuclease 7 large subunit (Shigella flexneri serotype 5b (strain 8401)).